We begin with the raw amino-acid sequence, 577 residues long: Proline--tRNA ligase (577 aa).

This sequence belongs to the class-II aminoacyl-tRNA synthetase family. ProS type 1 subfamily. In terms of assembly, homodimer.

It localises to the cytoplasm. The enzyme catalyses tRNA(Pro) + L-proline + ATP = L-prolyl-tRNA(Pro) + AMP + diphosphate. In terms of biological role, catalyzes the attachment of proline to tRNA(Pro) in a two-step reaction: proline is first activated by ATP to form Pro-AMP and then transferred to the acceptor end of tRNA(Pro). As ProRS can inadvertently accommodate and process non-cognate amino acids such as alanine and cysteine, to avoid such errors it has two additional distinct editing activities against alanine. One activity is designated as 'pretransfer' editing and involves the tRNA(Pro)-independent hydrolysis of activated Ala-AMP. The other activity is designated 'posttransfer' editing and involves deacylation of mischarged Ala-tRNA(Pro). The misacylated Cys-tRNA(Pro) is not edited by ProRS. The sequence is that of Proline--tRNA ligase from Helicobacter pylori (strain G27).